A 467-amino-acid polypeptide reads, in one-letter code: Argininosuccinate lyase (467 aa).

It belongs to the lyase 1 family. Argininosuccinate lyase subfamily.

The protein localises to the cytoplasm. It catalyses the reaction 2-(N(omega)-L-arginino)succinate = fumarate + L-arginine. Its pathway is amino-acid biosynthesis; L-arginine biosynthesis; L-arginine from L-ornithine and carbamoyl phosphate: step 3/3. The polypeptide is Argininosuccinate lyase (Anaeromyxobacter dehalogenans (strain 2CP-C)).